Here is a 436-residue protein sequence, read N- to C-terminus: Serine protease hepsin (436 aa).

The disordered stretch occupies residues 1–29; that stretch reads MAKEDEEPGAHRGGSTCSRPQPGKGGRTA. Residues 1-38 lie on the Cytoplasmic side of the membrane; sequence MAKEDEEPGAHRGGSTCSRPQPGKGGRTAACCSRPKVA. Residues 39–59 traverse the membrane as a helical; Signal-anchor for type II membrane protein segment; sequence ALIVGTLLFLTGIGAASWAIV. Residues 60–436 lie on the Extracellular side of the membrane; it reads TILLQSDQEP…SEASGMVTQP (377 aa). The SRCR domain maps to 73–170; it reads VQLSPGDSRL…RGRFLTATCQ (98 aa). 8 disulfide bridges follow: Cys-96–Cys-159, Cys-109–Cys-169, Cys-138–Cys-157, Cys-172–Cys-296, Cys-207–Cys-223, Cys-310–Cys-378, Cys-341–Cys-357, and Cys-368–Cys-400. Asn-131 is a glycosylation site (N-linked (GlcNAc...) asparagine). A Peptidase S1 domain is found at 182-424; the sequence is IVGGQDSSLG…FREWIFKAIK (243 aa). Residues His-222 and Asp-276 each act as charge relay system in the active site. Ser-372 functions as the Charge relay system in the catalytic mechanism.

The protein belongs to the peptidase S1 family. As to expression, detected in kidney, in thick ascending tubule epithelial cells (at protein level). Detected in kidney and liver.

Its subcellular location is the apical cell membrane. The protein resides in the cell membrane. The protein localises to the secreted. The catalysed reaction is Cleavage after basic amino-acid residues, with Arg strongly preferred to Lys.. Its function is as follows. Serine protease that cleaves extracellular substrates, and contributes to the proteolytic processing of growth factors, such as HGF and MST1/HGFL. Plays a role in cell growth and maintenance of cell morphology. Plays a role in the proteolytic processing of ACE2. Mediates the proteolytic cleavage of urinary UMOD that is required for UMOD polymerization. The protein is Serine protease hepsin (Hpn) of Mus musculus (Mouse).